Here is a 40-residue protein sequence, read N- to C-terminus: Protein P4 (40 aa).

A helical membrane pass occupies residues 10-29; it reads KYFAYGVAISAAGAILAEYV.

It localises to the virion membrane. Functionally, may interact with the viral DNA. This Pseudoalteromonas phage PM2 (Bacteriophage PM2) protein is Protein P4 (IV).